Reading from the N-terminus, the 245-residue chain is MSQSGSALRRNGFTFKQFFVAHDRCAMKVGTDGILLGAWAPVADVKRILDIGTGSGLLALMLAQRTDDNVPIDAVELDAGAAMQAQENVAHSPWPHRITVHTDDIQRWAPRQTVRFDLIISNPPYYEPGVECATPQREQARYTATLDHQTLLAIAADCITEDGFFCVVLPEQIGNAFTQQALNMGWHLRLRTDVAENEARLPHRVLLAFSPQAGECFSDRLVIRGSDQHYSESYTALTQAFYLFM.

The protein belongs to the methyltransferase superfamily. tRNA (adenine-N(6)-)-methyltransferase family.

The protein resides in the cytoplasm. It carries out the reaction adenosine(37) in tRNA1(Val) + S-adenosyl-L-methionine = N(6)-methyladenosine(37) in tRNA1(Val) + S-adenosyl-L-homocysteine + H(+). Specifically methylates the adenine in position 37 of tRNA(1)(Val) (anticodon cmo5UAC). This Salmonella paratyphi A (strain ATCC 9150 / SARB42) protein is tRNA1(Val) (adenine(37)-N6)-methyltransferase.